A 318-amino-acid polypeptide reads, in one-letter code: Protoheme IX farnesyltransferase (318 aa).

The next 9 helical transmembrane spans lie at 31-51 (IILL…QGPL), 55-75 (LAIA…TLNC), 98-118 (IQPF…FILL), 125-145 (LAAG…THGL), 153-173 (IVIG…AVTG), 181-201 (ILFA…ALMI), 206-228 (AAVK…QILA), 238-260 (LALA…LLGL), and 285-305 (FSIF…LPGA).

Belongs to the UbiA prenyltransferase family. Protoheme IX farnesyltransferase subfamily.

The protein resides in the cell inner membrane. The enzyme catalyses heme b + (2E,6E)-farnesyl diphosphate + H2O = Fe(II)-heme o + diphosphate. It functions in the pathway porphyrin-containing compound metabolism; heme O biosynthesis; heme O from protoheme: step 1/1. In terms of biological role, converts heme B (protoheme IX) to heme O by substitution of the vinyl group on carbon 2 of heme B porphyrin ring with a hydroxyethyl farnesyl side group. This chain is Protoheme IX farnesyltransferase, found in Synechococcus elongatus (strain ATCC 33912 / PCC 7942 / FACHB-805) (Anacystis nidulans R2).